A 1006-amino-acid polypeptide reads, in one-letter code: MGVPSFFRWLSRKYPKIISPVLEEQPQIVDGVILPLDYSASNPNGELDNLYLDMNGIVHPCSHPENKPPPETEDEMLLAVFEYTNRVLNMARPRKVLVMAVDGVAPRAKMNQQRARRFRSARDAQIENEAREEIMRQREEVGEIIDDAVRNKKTWDSNAITPGTPFMDKLAAALRYWTAFKLATDPGWKNLQVIISDATVPGEGEHKIMNFIRSQRADPEYNPNTTHCIYGLDADLIFLGLATHEPHFKILREDVFAQDNRKRNNLKDTINMTEEEKQFLQKQNSEQPFLWLHINVLREYLSAELWVPGLPFTFDLERAIDDWVFMCFFCGNDFLPHLPCLDVRENSIDILLDIWKVVLPKLKTYMTCDGVLNLPSVETLLQHLGSREGDIFKTRHIQEARKKEAFERRKAQKNMSKGQDRHPTVATEQLQMYDTQGNLAKGSWNLTTSDMVRLKKELMLANEGNEEAIAKVKQQSDKNNELMKDISKEEIDDAVSKANKTNFNLAEVMKQKIINKKHRLEKDNEEEEIAKDSKKVKTEKAESECDLDAEIKDEIVADVNDRENSETTEVSRDSPVHSTVNVSEGPKNGVFDTDEFVKLFEPGYHERYYTAKFHVTPQDIEQLRKDMVKCYIEGVAWVLMYYYQGCASWNWFYPYHYAPLATDFHGFSHLEIKFEEGTPFLPYEQLMSVLPAASGHALPKIFRSLMSEPDSEIIDFYPEEFPIDMNGKKMSWQGIALLPFIDQDRLLTAVRAQYPLLSDAERARNIRGEPVLLISNKNANYERFSKKLYSKENNNNNVVVKFQHFKSGLSGIVSKDVEGFELNGKIVCPIQGGSLPNLSTTLILKMSYRLIPLPSRNKSIILNGFIPSEPVLTAYDLDSIMYKYNNQNYSRRWNFGNDLKQNIVPVGPKGITQYKPRTGGYRAFFYFAELSRNNVQPAHNYGRNSYNSQPGFNNSRYDGGNNNYRQNSNYRNNNYSGNRNSGQYSGNSYSRNNKQSRYDNSRANRR.

Coiled-coil stretches lie at residues 256 to 287 and 453 to 544; these read FAQD…NSEQ and RLKK…AESE. Residues 492–529 form a required for retention in the nucleus region; it reads DDAVSKANKTNFNLAEVMKQKIINKKHRLEKDNEEEEI. Positions 561 to 575 are enriched in basic and acidic residues; the sequence is DRENSETTEVSRDSP. 2 disordered regions span residues 561-584 and 939-1006; these read DREN…NVSE and HNYG…ANRR. Position 574 is a phosphoserine (Ser-574). Polar residues predominate over residues 939–956; it reads HNYGRNSYNSQPGFNNSR. Repeat copies occupy residues 955–958, 961–964, 972–974, 975–978, 984–986, and 996–999. The tract at residues 955 to 999 is 2 X 4 AA repeats of S-R-Y-D, N-N-N-Y, Y-S-G-N; sequence SRYDGGNNNYRQNSNYRNNNYSGNRNSGQYSGNSYSRNNKQSRYD. Residues 959-993 show a composition bias toward low complexity; that stretch reads GGNNNYRQNSNYRNNNYSGNRNSGQYSGNSYSRNN. The segment covering 996–1006 has biased composition (basic and acidic residues); it reads SRYDNSRANRR.

It belongs to the 5'-3' exonuclease family. XRN2/RAT1 subfamily. As to quaternary structure, interacts with RAI1 and RTT103. Mg(2+) serves as cofactor. The cofactor is Mn(2+).

It is found in the nucleus. Inhibited by nucleoside 3', 5'-bisphosphates. Its function is as follows. Possesses 5'-&gt;3' exoribonuclease activity. Required for the processing of nuclear mRNA, rRNA and small nucleolar RNA (snoRNA) precursors. May promote termination of transcription by RNA polymerase II via the recruitment of 3'-end processing factors to the poly(A) site and by the degradation of nascent RNA downstream of the poly(A) site. The polypeptide is 5'-3' exoribonuclease 2 (RAT1) (Saccharomyces cerevisiae (strain ATCC 204508 / S288c) (Baker's yeast)).